The chain runs to 725 residues: Lipoamidase (725 aa).

The segment at 1-52 (MLAQESILETTVQTETESVTTETSQTVANLESETTSQTVMQEKESSSAIAES) is disordered. The span at 9–27 (ETTVQTETESVTTETSQTV) shows a compositional bias: low complexity. Residues 28–40 (ANLESETTSQTVM) are compositionally biased toward polar residues. Catalysis depends on charge relay system residues lysine 159 and serine 235. Serine 259 functions as the Acyl-ester intermediate in the catalytic mechanism. Positions 551 to 686 (KINQPHVEEP…NKSMIGKQEQ (136 aa)) are disordered. Positions 556 to 637 (HVEEPDKDKE…TSEGPIEGKD (82 aa)) are enriched in basic and acidic residues. The segment covering 650 to 661 (SGSSLDNSLNSS) has biased composition (low complexity). A compositionally biased stretch (polar residues) spans 662–679 (ANQGTKSTESTHAFSNKS). The helical transmembrane segment at 700 to 720 (PSTFWIVLGGAFLVTSGTIYI) threads the bilayer.

Belongs to the amidase family. Homodimer in solution.

The protein localises to the cell membrane. The enzyme catalyses N(6)-[(R)-lipoyl]-L-lysyl-[lipoyl-carrier protein] + H2O = L-lysyl-[lipoyl-carrier protein] + (R)-lipoate. With respect to regulation, lipoamidase activity is slightly inhibited by p-chloromercuribenzoate. In terms of biological role, amidohydrolase that releases lipoic acid from the protein-bound form. Cleaves the amide bond that links lipoic acid to the lipoylated lysine epsilon-amino groups, leading to the formation of free lipoic acid plus the unmodified protein. Shows activity toward both high molecular weight protein substrates such as a lipoyl domain and intact 2-oxoacid dehydrogenases as well as small molecule substrates such as lipoyl-lysine. Also acts on small biotinylated substrates. Hydrolyzes the synthetic substrates methyl lipoate and lipoamide. The physiologically important substrates are probably lipoyl-lysine and small peptides containing lipoyl-lysine. Lpa seems likely to enable this bacterium to utilize amide-linked forms of lipoic acid that otherwise could not be assimilated. The polypeptide is Lipoamidase (Enterococcus faecalis (Streptococcus faecalis)).